Reading from the N-terminus, the 333-residue chain is DNA-directed RNA polymerase subunit alpha (333 aa).

Positions 1-233 (MVQEKLRFST…DLFIPFLHAE (233 aa)) are alpha N-terminal domain (alpha-NTD). An alpha C-terminal domain (alpha-CTD) region spans residues 266–333 (KKEIALKSIF…DILKIQKYFT (68 aa)).

This sequence belongs to the RNA polymerase alpha chain family. In plastids the minimal PEP RNA polymerase catalytic core is composed of four subunits: alpha, beta, beta', and beta''. When a (nuclear-encoded) sigma factor is associated with the core the holoenzyme is formed, which can initiate transcription.

The protein localises to the plastid. The protein resides in the chloroplast. It carries out the reaction RNA(n) + a ribonucleoside 5'-triphosphate = RNA(n+1) + diphosphate. Functionally, DNA-dependent RNA polymerase catalyzes the transcription of DNA into RNA using the four ribonucleoside triphosphates as substrates. The protein is DNA-directed RNA polymerase subunit alpha of Phaseolus angularis (Azuki bean).